The following is a 417-amino-acid chain: RH-like protein IIR (417 aa).

11 helical membrane passes run 12–32 (CLPL…YFFT), 44–64 (LVAS…GFGF), 77–97 (VAFS…LDGF), 125–145 (ISVD…MVLV), 172–192 (IYVF…KPLP), 203–223 (TIPS…WPSF), 238–258 (VFNT…GSSL), 265–285 (ISMS…GTSC), 287–307 (LIPS…ISVG), 331–351 (NFSW…VRHT), and 358–378 (MIGF…TIAL).

This sequence belongs to the ammonium transporter (TC 2.A.49) family. Rh subfamily.

Its subcellular location is the membrane. In terms of biological role, may be part of an oligomeric complex which is likely to have a transport or channel function in the erythrocyte membrane. The protein is RH-like protein IIR of Pan troglodytes (Chimpanzee).